Consider the following 90-residue polypeptide: Small ribosomal subunit protein uS15 (90 aa).

The protein belongs to the universal ribosomal protein uS15 family. In terms of assembly, part of the 30S ribosomal subunit. Forms a bridge to the 50S subunit in the 70S ribosome, contacting the 23S rRNA.

Its function is as follows. One of the primary rRNA binding proteins, it binds directly to 16S rRNA where it helps nucleate assembly of the platform of the 30S subunit by binding and bridging several RNA helices of the 16S rRNA. In terms of biological role, forms an intersubunit bridge (bridge B4) with the 23S rRNA of the 50S subunit in the ribosome. In Helicobacter acinonychis (strain Sheeba), this protein is Small ribosomal subunit protein uS15.